The sequence spans 225 residues: Uridylate kinase (225 aa).

Asp6 is a Mg(2+) binding site. Residue Gly9–Ser10 coordinates ATP. Position 44 (Gly44) interacts with UMP. ATP-binding residues include Gly45 and Arg49. UMP is bound by residues Asp66 and Thr114 to Thr120. The Mg(2+) site is built by Thr120 and Asp121. ATP-binding residues include Thr140, Asn141, Tyr146, and Asp149. Gly179 lines the UMP pocket. Ser182 lines the Mg(2+) pocket. Ser182 lines the ATP pocket.

This sequence belongs to the UMP kinase family. In terms of assembly, homohexamer; trimer of dimers.

Its subcellular location is the cytoplasm. It carries out the reaction UMP + ATP = UDP + ADP. It functions in the pathway pyrimidine metabolism; CTP biosynthesis via de novo pathway; UDP from UMP (UMPK route): step 1/1. Inhibited by UTP. Functionally, catalyzes the reversible phosphorylation of UMP to UDP, with ATP as the most efficient phosphate donor. In Pyrococcus furiosus (strain ATCC 43587 / DSM 3638 / JCM 8422 / Vc1), this protein is Uridylate kinase (pyrH).